A 393-amino-acid polypeptide reads, in one-letter code: Bifunctional enzyme Fae/Hps (393 aa).

Positions 1–161 (MYLIGEALIG…HEKDRAAHAV (161 aa)) are formaldehyde-activating enzyme. The active-site Proton donor is the histidine 17. Aspartate 19, leucine 48, lysine 66, threonine 68, and glutamine 83 together coordinate substrate. The 3-hexulose-6-phosphate synthase stretch occupies residues 162–393 (MGFKVPRLWD…IDQFRIMTDF (232 aa)).

In the N-terminal section; belongs to the formaldehyde-activating enzyme family. The protein in the C-terminal section; belongs to the HPS/KGPDC family. HPS subfamily.

The catalysed reaction is 5,6,7,8-tetrahydromethanopterin + formaldehyde = 5,10-methylenetetrahydromethanopterin + H2O. It catalyses the reaction D-ribulose 5-phosphate + formaldehyde = D-arabino-hex-3-ulose 6-phosphate. Its pathway is carbohydrate biosynthesis; D-ribose 5-phosphate biosynthesis. Catalyzes the condensation of formaldehyde with tetrahydromethanopterin (H(4)MPT) to 5,10-methylenetetrahydromethanopterin. Its function is as follows. Catalyzes the reversible formation of ribulose-5-phosphate and formaldehyde from 3-hexulose-6-phosphate. The polypeptide is Bifunctional enzyme Fae/Hps (Methanospirillum hungatei JF-1 (strain ATCC 27890 / DSM 864 / NBRC 100397 / JF-1)).